We begin with the raw amino-acid sequence, 176 residues long: Disulfide bond formation protein B (176 aa).

The Cytoplasmic segment spans residues 1–14; the sequence is MLRFLNRCSRGRGA. Residues 15–31 traverse the membrane as a helical segment; it reads WLLLAFTALALELTALY. The Periplasmic portion of the chain corresponds to 32–49; that stretch reads FQHVMLLKPCVLCIYQRS. Cys-41 and Cys-44 are joined by a disulfide. Residues 50–65 form a helical membrane-spanning segment; that stretch reads ALWGVFAAGIVGAIAP. Topologically, residues 66-71 are cytoplasmic; sequence SSLLRY. The chain crosses the membrane as a helical span at residues 72-89; it reads PAIALWIYSSYEGIRLAW. The Periplasmic portion of the chain corresponds to 90 to 144; the sequence is KHTDILLNPSPFTTCDFFVSFPSWLPLDKWLPAIFNATGDCSERQWSFLSMEMPQ. Residues Cys-104 and Cys-130 are joined by a disulfide bond. A helical membrane pass occupies residues 145 to 163; that stretch reads WLLGIFAAYLLIAVLVLIA. At 164 to 176 the chain is on the cytoplasmic side; the sequence is QPFRSKRRDLFSR.

This sequence belongs to the DsbB family.

The protein localises to the cell inner membrane. In terms of biological role, required for disulfide bond formation in some periplasmic proteins. Acts by oxidizing the DsbA protein. The chain is Disulfide bond formation protein B from Pectobacterium atrosepticum (strain SCRI 1043 / ATCC BAA-672) (Erwinia carotovora subsp. atroseptica).